The following is a 294-amino-acid chain: MKQTTISKKVEGVGIGLHKGEPIKLILEPLEANMGIVFYRSDLGSSFKAEPKNVINTQMATVVGNEKGSVSTIEHLLSAINSYGIDNIRIVLDANEVPVMDGSAISFCMMLDEAGVIELEADKKVIVVKKEVEVRDGDKYVKVTPSKNPKFNYTIKFENPIIGKQSYTFEFSKENFLNEIARARTFGFLKDVQKLNSMGLALGGSLDNAVVIDDSRILNPEGLRFENEFVRHKILDAIGDISLLGAPMVGDYEAYAGSHDLNHKLTVALLSDEKNYEMVTLDEQKAKEYAKAFA.

3 residues coordinate Zn(2+): H75, H232, and D236. Catalysis depends on H259, which acts as the Proton donor.

The protein belongs to the LpxC family. Zn(2+) serves as cofactor.

The catalysed reaction is a UDP-3-O-[(3R)-3-hydroxyacyl]-N-acetyl-alpha-D-glucosamine + H2O = a UDP-3-O-[(3R)-3-hydroxyacyl]-alpha-D-glucosamine + acetate. Its pathway is glycolipid biosynthesis; lipid IV(A) biosynthesis; lipid IV(A) from (3R)-3-hydroxytetradecanoyl-[acyl-carrier-protein] and UDP-N-acetyl-alpha-D-glucosamine: step 2/6. Catalyzes the hydrolysis of UDP-3-O-myristoyl-N-acetylglucosamine to form UDP-3-O-myristoylglucosamine and acetate, the committed step in lipid A biosynthesis. This Campylobacter fetus subsp. fetus (strain 82-40) protein is UDP-3-O-acyl-N-acetylglucosamine deacetylase.